A 250-amino-acid polypeptide reads, in one-letter code: Phosphonates import ATP-binding protein PhnC (250 aa).

Residues 2–247 (ILFNNVNKVW…KLDAQAMKKI (246 aa)) enclose the ABC transporter domain. 35 to 42 (GLSGAGKT) provides a ligand contact to ATP.

The protein belongs to the ABC transporter superfamily. Phosphonates importer (TC 3.A.1.9.1) family. The complex is composed of two ATP-binding proteins (PhnC), two transmembrane proteins (PhnE) and a solute-binding protein (PhnD).

The protein resides in the cell membrane. The catalysed reaction is phosphonate(out) + ATP + H2O = phosphonate(in) + ADP + phosphate + H(+). In terms of biological role, part of the ABC transporter complex PhnCDE involved in phosphonates import. Responsible for energy coupling to the transport system. The sequence is that of Phosphonates import ATP-binding protein PhnC from Mycoplasma capricolum subsp. capricolum (strain California kid / ATCC 27343 / NCTC 10154).